A 630-amino-acid chain; its full sequence is Tyrosinase (630 aa).

Cu cation-binding residues include His69, His92, His101, His317, His321, and His360. Residues 90–92 constitute a cross-link (2'-(S-cysteinyl)-histidine (Cys-His)); the sequence is CVH.

It belongs to the tyrosinase family. Cu(2+) is required as a cofactor.

The catalysed reaction is 2 L-dopa + O2 = 2 L-dopaquinone + 2 H2O. It carries out the reaction L-tyrosine + O2 = L-dopaquinone + H2O. This is a copper-containing oxidase that functions in the formation of pigments such as melanins and other polyphenolic compounds. This chain is Tyrosinase (tyr1), found in Aspergillus fumigatus (strain ATCC MYA-4609 / CBS 101355 / FGSC A1100 / Af293) (Neosartorya fumigata).